The chain runs to 572 residues: Oxygen-dependent choline dehydrogenase (572 aa).

7 to 36 (DYIIIGAGSAGNVLATRLTEDRDVTVLLLE) contributes to the FAD binding site. The active-site Proton acceptor is the His474.

Belongs to the GMC oxidoreductase family. FAD serves as cofactor.

The catalysed reaction is choline + A = betaine aldehyde + AH2. The enzyme catalyses betaine aldehyde + NAD(+) + H2O = glycine betaine + NADH + 2 H(+). The protein operates within amine and polyamine biosynthesis; betaine biosynthesis via choline pathway; betaine aldehyde from choline (cytochrome c reductase route): step 1/1. Involved in the biosynthesis of the osmoprotectant glycine betaine. Catalyzes the oxidation of choline to betaine aldehyde and betaine aldehyde to glycine betaine at the same rate. This chain is Oxygen-dependent choline dehydrogenase, found in Paraburkholderia phymatum (strain DSM 17167 / CIP 108236 / LMG 21445 / STM815) (Burkholderia phymatum).